The following is a 500-amino-acid chain: ATP synthase subunit alpha (500 aa).

An ATP-binding site is contributed by 168–175; that stretch reads GDRQTGKT.

This sequence belongs to the ATPase alpha/beta chains family. As to quaternary structure, F-type ATPases have 2 components, CF(1) - the catalytic core - and CF(0) - the membrane proton channel. CF(1) has five subunits: alpha(3), beta(3), gamma(1), delta(1), epsilon(1). CF(0) has three main subunits: a(1), b(2) and c(9-12). The alpha and beta chains form an alternating ring which encloses part of the gamma chain. CF(1) is attached to CF(0) by a central stalk formed by the gamma and epsilon chains, while a peripheral stalk is formed by the delta and b chains.

It localises to the cell membrane. It catalyses the reaction ATP + H2O + 4 H(+)(in) = ADP + phosphate + 5 H(+)(out). In terms of biological role, produces ATP from ADP in the presence of a proton gradient across the membrane. The alpha chain is a regulatory subunit. This chain is ATP synthase subunit alpha, found in Streptococcus suis (strain 98HAH33).